Reading from the N-terminus, the 410-residue chain is NADH-quinone oxidoreductase subunit D (410 aa).

Belongs to the complex I 49 kDa subunit family. As to quaternary structure, NDH-1 is composed of 14 different subunits. Subunits NuoB, C, D, E, F, and G constitute the peripheral sector of the complex.

The protein localises to the cell inner membrane. The catalysed reaction is a quinone + NADH + 5 H(+)(in) = a quinol + NAD(+) + 4 H(+)(out). NDH-1 shuttles electrons from NADH, via FMN and iron-sulfur (Fe-S) centers, to quinones in the respiratory chain. The immediate electron acceptor for the enzyme in this species is believed to be ubiquinone. Couples the redox reaction to proton translocation (for every two electrons transferred, four hydrogen ions are translocated across the cytoplasmic membrane), and thus conserves the redox energy in a proton gradient. The sequence is that of NADH-quinone oxidoreductase subunit D from Nitratiruptor sp. (strain SB155-2).